The chain runs to 158 residues: Endoribonuclease YbeY (158 aa).

Positions 119, 123, and 129 each coordinate Zn(2+).

The protein belongs to the endoribonuclease YbeY family. The cofactor is Zn(2+).

Its subcellular location is the cytoplasm. Its function is as follows. Single strand-specific metallo-endoribonuclease involved in late-stage 70S ribosome quality control and in maturation of the 3' terminus of the 16S rRNA. In Shewanella sediminis (strain HAW-EB3), this protein is Endoribonuclease YbeY.